Here is a 569-residue protein sequence, read N- to C-terminus: Santalene synthase (569 aa).

(2E)-geranyl diphosphate is bound by residues arginine 284, aspartate 321, aspartate 325, and arginine 460. Mg(2+) contacts are provided by aspartate 321 and aspartate 325. The DDXXD motif signature appears at 321–325; it reads DDGYD. The Mg(2+) site is built by asparagine 463, threonine 467, and glutamate 471.

Belongs to the terpene synthase family. Tpsb subfamily. Requires Mg(2+) as cofactor. Mn(2+) serves as cofactor.

It catalyses the reaction (2E,6E)-farnesyl diphosphate = (1S,5S,6R)-alpha-bergamotene + diphosphate. The catalysed reaction is (2E,6E)-farnesyl diphosphate = (+)-alpha-santalene + diphosphate. The enzyme catalyses (2E,6E)-farnesyl diphosphate = (-)-beta-santalene + diphosphate. Its function is as follows. Catalyzes a mixture of sesquiterpenoids from (2E,6E)-farnesyl diphosphate in fragrance biosynthesis. Catalyzes the formation of alpha-santalene, beta-santalene, epi-beta-santalene and exo-alpha-bergamotene, as well as traces of alpha-farnesene and beta-farnesene. Also acts with (Z,Z)-farnesyl diphosphate isomer, producing alpha-endo-bergamotene, alpha-santalene, (Z)-beta-farnesene, epi-beta-santalene, and beta-santalene. In Santalum album (White sandalwood), this protein is Santalene synthase.